We begin with the raw amino-acid sequence, 287 residues long: Putative syntaxin-4 (287 aa).

Residues 1 to 262 lie on the Cytoplasmic side of the membrane; that stretch reads MHQISGINAA…NRKWKIVTCI (262 aa). Residues 65–97 are a coiled coil; the sequence is KCRKLNDHVDKFIAQARGIRRRLADASEELVQY. The t-SNARE coiled-coil homology domain maps to 184 to 246; that stretch reads FDDMKNRATD…EQAQQNVRQA (63 aa). Residues 263–283 form a helical; Anchor for type IV membrane protein membrane-spanning segment; sequence ALIVLLLVVVYLLSHFLGAII. Residues 284 to 287 are Extracellular-facing; it reads PGWK.

The protein belongs to the syntaxin family.

Its subcellular location is the membrane. Potentially involved in docking of synaptic vesicles at presynaptic active zones. This Caenorhabditis elegans protein is Putative syntaxin-4 (syx-4).